A 374-amino-acid chain; its full sequence is Zinc finger CCCH domain-containing protein 15 homolog (374 aa).

Residues 1-20 (MPPKQQGPSKKSEQKRKEKV) form a disordered region. Residues 10–20 (KKSEQKRKEKV) are compositionally biased toward basic and acidic residues. C3H1-type zinc fingers lie at residues 90–117 (DPKS…HDLA) and 166–199 (VCKY…HCLP).

Belongs to the ZC3H15/TMA46 family.

In Caenorhabditis elegans, this protein is Zinc finger CCCH domain-containing protein 15 homolog.